The primary structure comprises 769 residues: Integrin beta-2 (769 aa).

Residues 1 to 22 form the signal peptide; sequence MLCRCSPLLLLVGLLTLRSALS. Position 23 is a pyrrolidone carboxylic acid (Gln23). Residues 23–700 lie on the Extracellular side of the membrane; sequence QECAKYKVST…ETRECVKGPN (678 aa). Residues 24–74 form the PSI domain; sequence ECAKYKVSTCRDCIESGPGCAWCQKLNFSGQGEPDSVRCDTREQLLAKGCV. 28 disulfides stabilise this stretch: Cys25–Cys43, Cys33–Cys447, Cys36–Cys62, Cys46–Cys73, Cys191–Cys198, Cys246–Cys286, Cys386–Cys400, Cys420–Cys445, Cys449–Cys467, Cys459–Cys470, Cys472–Cys481, Cys483–Cys514, Cys497–Cys512, Cys506–Cys517, Cys519–Cys534, Cys536–Cys559, Cys541–Cys557, Cys549–Cys562, Cys564–Cys573, Cys575–Cys598, Cys582–Cys596, Cys590–Cys601, Cys603–Cys612, Cys615–Cys618, Cys622–Cys662, Cys628–Cys647, Cys631–Cys643, and Cys670–Cys695. N-linked (GlcNAc...) asparagine glycosylation is found at Asn50 and Asn116. Residues 124-363 enclose the VWFA domain; that stretch reads GYPIDLYYLM…ELIKNAYNKL (240 aa). The Mg(2+) site is built by Ser136 and Ser138. 4 residues coordinate Ca(2+): Ser138, Asp141, Asp142, and Asp173. Positions 229, 231, 233, and 234 each coordinate Ca(2+). Glu234 serves as a coordination point for Mg(2+). Residue Asn254 is glycosylated (N-linked (GlcNAc...) asparagine). Residues Asp264 and Glu347 each coordinate Ca(2+). Residues 397–399 carry the Cell attachment site motif; it reads RGD. 4 I-EGF domains span residues 449 to 482, 483 to 535, 536 to 574, and 575 to 613; these read CGDSSKERTLCGNKGSMECGVCRCDAGYIGKHCE, CQTQ…QFCE, CDNMNCERFDGQVCGGEKRGLCFCSTCRCQEGFEGSACQ, and CLKSTQGCLNLQGVECSGRGRCRCNVCQCDFGYQPPLCT. Asn501 is a glycosylation site (N-linked (GlcNAc...) asparagine). The N-linked (GlcNAc...) asparagine glycan is linked to Asn642. The chain crosses the membrane as a helical span at residues 701 to 723; the sequence is IAAIVGGTVGGVVLVGIFLLVIW. The Cytoplasmic segment spans residues 724 to 769; sequence KVLTHLSDLREYKRFEKEKLKSQWNNDNPLFKSATTTVMNPKFAER. Residues Ser745 and Ser756 each carry the phosphoserine modification. Residues Thr758 and Thr760 each carry the phosphothreonine modification.

It belongs to the integrin beta chain family. Heterodimer of an alpha and a beta subunit. The ITGB2 beta subunit associates with the ITGAL, ITGAM, ITGAX or ITGAD alpha subunits. Found in a complex with CD177 and ITGAM/CD11b. Interacts with FGR. Interacts with COPS5 and RANBP9. Interacts with FLNA (via filamin repeats 4, 9, 12, 17, 19, 21, and 23). Interacts with THBD. In terms of processing, both Ser-745 and Ser-756 become phosphorylated when T-cells are exposed to phorbol esters. Phosphorylation on Thr-758 (but not on Ser-756) allows interaction with 14-3-3 proteins.

The protein resides in the cell membrane. It is found in the membrane raft. In terms of biological role, integrin ITGAL/ITGB2 is a receptor for ICAM1, ICAM2, ICAM3 and ICAM4. Integrin ITGAL/ITGB2 is also a receptor for the secreted form of ubiquitin-like protein ISG15; the interaction is mediated by ITGAL. Integrins ITGAM/ITGB2 and ITGAX/ITGB2 are receptors for the iC3b fragment of the third complement component and for fibrinogen. Integrin ITGAX/ITGB2 recognizes the sequence G-P-R in fibrinogen alpha-chain. Integrin ITGAM/ITGB2 recognizes P1 and P2 peptides of fibrinogen gamma chain. Integrin ITGAM/ITGB2 is also a receptor for factor X. Integrin ITGAD/ITGB2 is a receptor for ICAM3 and VCAM1. Contributes to natural killer cell cytotoxicity. Involved in leukocyte adhesion and transmigration of leukocytes including T-cells and neutrophils. Triggers neutrophil transmigration during lung injury through PTK2B/PYK2-mediated activation. Integrin alpha-L/beta-2 in association with ICAM3, contributes to apoptotic neutrophil phagocytosis by macrophages. The protein is Integrin beta-2 (ITGB2) of Sus scrofa (Pig).